The primary structure comprises 502 residues: MSLLLTLIALLVSLLLFMARRRHGYWQRRGIPHDVPHPIYGNMKDWPKKRHIAMIFRDYYTKYKRSVYPFAGFYFFFTRSAVITDLELVKRVLIKDFNHFENRGIFYNEIDDPLSATLFSIEGQKWRHLRHKLTPTFTSGKMKNMFPIIVKVGEEMEKIFSAKTTTGEGQVLEIVDLVARYTADVIGNCAFGLNCNSLQNPNAEFVTIGKRAIIERRYGGLLDFLIFGFPKLSRRLRLKLNVQDVEDFYTSIVRNTIDYRLRTNEKRHDFMDSLIEMYEKEQAGNTEDGLSFNEILAQAFIFFVAGFETSSTTMGFALYELALDQDIQDQLRAEINNVLSKHNNEFTYEGIKEMKYLEQVVMETLRKYPVLAHLTRMTQTDFSPEDPKYFIAKGTTVVIPALGIHYDPEIYPEPEKFKPERFTDEAIAARPSCTWLPFGEGPRNCIGLRFGLMQACVGLAYLIRGYKFSVSTETQIPMKFVVKSILLSAENGIHLKVEKLSK.

Position 445 (Cys445) interacts with heme.

Belongs to the cytochrome P450 family. It depends on heme as a cofactor.

It is found in the endoplasmic reticulum membrane. The protein resides in the microsome membrane. In terms of biological role, may be involved in the metabolism of insect hormones and in the breakdown of synthetic insecticides. This is Probable cytochrome P450 6a23 (Cyp6a23) from Drosophila melanogaster (Fruit fly).